A 141-amino-acid polypeptide reads, in one-letter code: Large ribosomal subunit protein uL11 (141 aa).

This sequence belongs to the universal ribosomal protein uL11 family. In terms of assembly, part of the ribosomal stalk of the 50S ribosomal subunit. Interacts with L10 and the large rRNA to form the base of the stalk. L10 forms an elongated spine to which L12 dimers bind in a sequential fashion forming a multimeric L10(L12)X complex. Post-translationally, one or more lysine residues are methylated.

Forms part of the ribosomal stalk which helps the ribosome interact with GTP-bound translation factors. This Gloeothece citriformis (strain PCC 7424) (Cyanothece sp. (strain PCC 7424)) protein is Large ribosomal subunit protein uL11.